The sequence spans 188 residues: dCTP deaminase (188 aa).

109–114 (KSTYAR) lines the dCTP pocket. E135 serves as the catalytic Proton donor/acceptor. Positions 154, 168, and 178 each coordinate dCTP.

Belongs to the dCTP deaminase family. In terms of assembly, homotrimer.

The enzyme catalyses dCTP + H2O + H(+) = dUTP + NH4(+). The protein operates within pyrimidine metabolism; dUMP biosynthesis; dUMP from dCTP (dUTP route): step 1/2. Catalyzes the deamination of dCTP to dUTP. The polypeptide is dCTP deaminase (Helicobacter pylori (strain G27)).